The sequence spans 327 residues: Probable cell division protein WhiA (327 aa).

Residues 275–308 (SLEELGRLADPQMTKDAVAGRIRRLLTMADKRAE) constitute a DNA-binding region (H-T-H motif).

It belongs to the WhiA family.

In terms of biological role, involved in cell division and chromosome segregation. This Corynebacterium glutamicum (strain R) protein is Probable cell division protein WhiA.